Consider the following 241-residue polypeptide: MSELLQAQSLFKSYRRRVVVRDVSVQVATGEVVGLLGPNGAGKTTTFYMMVGLVRPDRGHIFLQQRDITALPMHERARMGLGYLPQEPSVFRQMSAADNVLAVLETLPLSPVERQERQEQLLSELHLHALRDTKGHSLSGGERRRVEIARALAMSPRFILLDEPFAGIDPISVLEIQRLIRDLRARGIGVLITDHNVRETLGICERAYILHDGKVLTAGSPQEIVDDPMVRQVYLGDQFQI.

One can recognise an ABC transporter domain in the interval 5 to 237 (LQAQSLFKSY…PMVRQVYLGD (233 aa)). 37–44 (GPNGAGKT) is an ATP binding site.

This sequence belongs to the ABC transporter superfamily. Outer membrane lipopolysaccharide export (TC 1.B.42) family. In terms of assembly, component of the lipopolysaccharide transport and assembly complex. The LptBFG transporter is composed of two ATP-binding proteins (LptB) and two transmembrane proteins (LptF and LptG).

Its subcellular location is the cytoplasm. It is found in the cell inner membrane. In terms of biological role, part of the ABC transporter complex LptBFG involved in the translocation of lipopolysaccharide (LPS) from the inner membrane to the outer membrane. Probably responsible for energy coupling to the transport system. This is Lipopolysaccharide export system ATP-binding protein LptB (lptB) from Acidithiobacillus ferridurans.